We begin with the raw amino-acid sequence, 147 residues long: Myosin-ID light chain (147 aa).

3 consecutive EF-hand domains span residues 8-43 (EAQS…LGQN), 79-114 (FDEK…LGER), and 115-147 (LPEE…MLKK). Ca(2+) is bound by residues D21, N23, D25, K27, and E32.

In terms of assembly, myosin I is a dimer of a heavy and a light chain. Inability to self-assemble into filaments. Interacts with myoD. Does not interact with myoB or myoC.

It localises to the cytoplasm. In terms of biological role, functions as the light chain for myosin-D. Has low affinity for calcium. In Dictyostelium discoideum (Social amoeba), this protein is Myosin-ID light chain (mlcD).